The following is a 1224-amino-acid chain: MAYPEKVGARVRYNFGRLREVLDLPNLIEVQRNSYKWFLEEGLREVFQDISPIQDFTGNLVLEFLDYTLGEPKYTVEECKERDVTYAAPLRVKVRLINKETGEVKEQDVFMGDFPLMTEKGTFIINGAERVIVSQLVRSPGVYFDETIDPSGKKLYTATIIPNRGAWLEFETDVNDHIFVRIDRTRKIPATVLVRALGYGTKAQVAELFNEDKNILETLARDNTDSEEEALVEIYKRLRPGEPPTVDSARSLLTSLFFDPKRYDLANVGRYKIQKKLKHGVLYRYGPNPDGKTVFDPYLKKEVPQKREFIRELTKEDIIETIRYLLKLMNGEGQVDDIDHLGNRRLRSVGELLQNQFRIGLSRMERVVRERMTIQDVDVITPQVLINIRPVVAAIKEFFGSSQLSQFMDQTNPLAELTHKRRLSALGPGGLSRERAGFEVRDVHHSHYGRMCPIETPEGPNIGLIGSLSTYARINEFGFIETPYRKVDKENRRVTDEIVYLTADEEEGYVIAQANAPLDEEGRFIEPRVNARSPEIVVVPADRVDYMDVSPKQVFSIATALIPFLEHDDANRALMGANMQRQAVPLLKAQAPLVGTGIEYKAARDSGVVVIAKESGTVEKVTSTHIEIRNDRGYLDRYKLLKFTRSNQGTCVNQKPIVKKGERVEAGQVIADGPSTDYGELALGRNVLVAFMPWEGYNYEDAILVSEKTVKEDYFTSIHIEEYECDARDTKLGPEEITRDIPNVGEEILKDLDDRGIIRVGAEVRPGDILVGKVTPKGETELTAEERLLRAIFGEKAREVRDTSLRVPHGESGKVVDVKVFSRDNGDELPPGVNQLVRVYIAQKRKISEGDKMAGRHGNKGVIARILPEEDMPFLPDGTPIEIVLNPLGVPSRMNIGQVLEAHLGWAAKVLGYYVSTPVFNGASEESIFEALKEAAFKESGLRSFMEKAGLNEEELIGAVETAEKRAGSREALIKEVEGAESSGETIMAAIERTGLTAGMVNRLEEAGMTKKEILGAMKKLLFARSGKMTLYDGRTGEPFDSPITVGYVYMLKLAHLVDDKIHARSTGPYSLVTQQPLGGKAQFGGQRFGEMEVWALEAYGAAYTLQEILTVKSDDVVGRVKTYEAIVKGENVPEPGVPESFKVLIKELQSLGLDVKVLSEDDQEIEIREVEEDIGETAKELGIDLQEGELPEVEEADYSEDVEDEDMFNEEFFNEDFDLEDDE.

The protein belongs to the RNA polymerase beta chain family. The RNAP catalytic core consists of 2 alpha, 1 beta, 1 beta' and 1 omega subunit. When a sigma factor is associated with the core the holoenzyme is formed, which can initiate transcription.

It carries out the reaction RNA(n) + a ribonucleoside 5'-triphosphate = RNA(n+1) + diphosphate. In terms of biological role, DNA-dependent RNA polymerase catalyzes the transcription of DNA into RNA using the four ribonucleoside triphosphates as substrates. The chain is DNA-directed RNA polymerase subunit beta from Pelotomaculum thermopropionicum (strain DSM 13744 / JCM 10971 / SI).